The chain runs to 110 residues: PCNA-associated factor (110 aa).

K15 participates in a covalent cross-link: Glycyl lysine isopeptide (Lys-Gly) (interchain with G-Cter in ubiquitin). Residues 23–34 carry the D-box motif; it reads RKVLGSSTFVTN. K24 carries the post-translational modification N6-acetyllysine; alternate. Residue K24 forms a Glycyl lysine isopeptide (Lys-Gly) (interchain with G-Cter in ubiquitin); alternate linkage. Position 28 is a phosphoserine (S28). The span at 29 to 39 shows a compositional bias: low complexity; the sequence is STFVTNSSGSS. A disordered region spans residues 29–110; sequence STFVTNSSGS…QPDHRDDENE (82 aa). Residues 61-71 carry the PIP-box motif; sequence QKGIGEFFRLS. S71 bears the Phosphoserine mark. A compositionally biased stretch (basic and acidic residues) spans 71 to 80; the sequence is SPKDSKKENQ. A KEN box motif is present at residues 77–79; the sequence is KEN. An Initiation motif motif is present at residues 84 to 96; sequence EAGSSGLGKAKRK.

Interacts (when monoubiquitinated at Lys-15 and Lys-24) with PCNA. Interacts with isoform 2/p33ING1b of ING1. Interacts with BRCA1. In terms of processing, monoubiquitinated at Lys-15 and Lys-24 during normal S phase, promoting its association with PCNA. Also diubiquitinated at these 2 sites. Following DNA damage, monoubiquitin chains at Lys-15 and Lys-24 are probably extended, leading to disrupt the interaction with PCNA. Polyubiquitinated by the APC/C complex at the mitotic exit, leading to its degradation by the proteasome.

The protein resides in the nucleus. It is found in the cytoplasm. It localises to the perinuclear region. PCNA-binding protein that acts as a regulator of DNA repair during DNA replication. Following DNA damage, the interaction with PCNA is disrupted, facilitating the interaction between monoubiquitinated PCNA and the translesion DNA synthesis DNA polymerase eta (POLH) at stalled replisomes, facilitating the bypass of replication-fork-blocking lesions. Also acts as a regulator of centrosome number. The chain is PCNA-associated factor from Rattus norvegicus (Rat).